The chain runs to 163 residues: Probable protein tyrosine phosphatase type IVA B (163 aa).

One can recognise a Tyrosine-protein phosphatase domain in the interval 10-161; sequence TIIESSTHKF…YKASKKAGCK (152 aa). A disulfide bond links Cys-49 and Cys-104. Asp-70 serves as the catalytic Proton donor. The active-site Phosphocysteine intermediate is Cys-104. 105–110 lines the phosphate pocket; it reads IAGLGR. Substrate is bound at residue Arg-110. The residue at position 160 (Cys-160) is a Cysteine methyl ester. A lipid anchor (S-farnesyl cysteine) is attached at Cys-160. Positions 161–163 are cleaved as a propeptide — removed in mature form; the sequence is KIM.

Belongs to the protein-tyrosine phosphatase family.

It localises to the membrane. It catalyses the reaction O-phospho-L-tyrosyl-[protein] + H2O = L-tyrosyl-[protein] + phosphate. This is Probable protein tyrosine phosphatase type IVA B from Dictyostelium discoideum (Social amoeba).